Here is a 670-residue protein sequence, read N- to C-terminus: Probable leucine-rich repeat receptor-like protein kinase At1g68400 (670 aa).

A signal peptide spans 1-29 (MAKSSFFNKHLLLSLLILLQSCLLSSSSS). Residues 30–274 (TDSETLLNFK…KSNNTSRIST (245 aa)) are Extracellular-facing. N-linked (GlcNAc...) asparagine glycans are attached at residues Asn52, Asn79, Asn102, Asn109, and Asn112. 6 LRR repeats span residues 69 to 91 (RVTR…TSLT), 92 to 114 (SLRV…SNLT), 115 to 137 (ALKL…ITSL), 139 to 162 (RLYR…TDLT), 163 to 185 (HLLT…NLSD), and 186 to 207 (LQDF…LSQF). Asn149, Asn182, and Asn190 each carry an N-linked (GlcNAc...) asparagine glycan. The tract at residues 230-266 (SSDPTKPGRPDEAKASPLNKPETVPSSPTSIHGGDKS) is disordered. A compositionally biased stretch (polar residues) spans 253–266 (VPSSPTSIHGGDKS). A glycan (N-linked (GlcNAc...) asparagine) is linked at Asn268. Residues 275-295 (ISLIAIILGDFIILSFVSLLL) traverse the membrane as a helical segment. Residues 296 to 670 (YYCFWRQYAV…EDTCGGTTSQ (375 aa)) lie on the Cytoplasmic side of the membrane. Residues 362 to 636 (RASAEMLGKG…GHVVKLIEDI (275 aa)) form the Protein kinase domain. The residue at position 364 (Ser364) is a Phosphoserine. Residues 368 to 376 (LGKGGFGTA) and Lys390 each bind ATP. The residue at position 443 (Ser443) is a Phosphoserine. Thr463 bears the Phosphothreonine mark. Residue Asp491 is the Proton acceptor of the active site. Thr616 is modified (phosphothreonine).

It belongs to the protein kinase superfamily. Ser/Thr protein kinase family.

The protein localises to the cell membrane. The enzyme catalyses L-seryl-[protein] + ATP = O-phospho-L-seryl-[protein] + ADP + H(+). The catalysed reaction is L-threonyl-[protein] + ATP = O-phospho-L-threonyl-[protein] + ADP + H(+). The protein is Probable leucine-rich repeat receptor-like protein kinase At1g68400 of Arabidopsis thaliana (Mouse-ear cress).